The sequence spans 312 residues: Gamma-soluble NSF attachment protein (312 aa).

Residues 281–312 form a disordered region; sequence KKKSPATPQAKPDGAAGMAAEEEEDEYSGGLC. Phosphoserine is present on Ser284. Residue Thr287 is modified to Phosphothreonine. The span at 300–312 shows a compositional bias: acidic residues; sequence AEEEEDEYSGGLC. Position 308 is a phosphoserine (Ser308).

The protein belongs to the SNAP family. In terms of assembly, interacts with RAB11FIP5. Interacts with VTI1A. Abundantly expressed in the heart, liver and kidneys with lower expression in the brain, spleen, lung, muscle and testes.

It localises to the membrane. Its subcellular location is the golgi apparatus. Required for vesicular transport between the endoplasmic reticulum and the Golgi apparatus. This is Gamma-soluble NSF attachment protein from Mus musculus (Mouse).